A 174-amino-acid chain; its full sequence is Variant surface antigen F (174 aa).

A signal peptide spans M1–S29. C30 carries N-palmitoyl cysteine lipidation. C30 carries S-diacylglycerol cysteine lipidation. The tract at residues Q32–K174 is disordered. The segment covering S43–N53 has biased composition (gly residues). Tandem repeats lie at residues S55–Q67, G68–Q80, G81–Q93, G94–Q106, G107–Q119, G120–Q132, G133–Q145, G146–Q158, and G159–Q171. The 9 X 13 AA tandem repeats stretch occupies residues S55–Q171. Over residues E62–K174 the composition is skewed to polar residues.

The protein localises to the cell membrane. Functionally, responsible for the antigenic diversity for host adaptation. Expression in E.coli of a construct containing vlpD, vlpE, and vlpF yields antigenically distinguishable products corresponding to each gene. This chain is Variant surface antigen F (vlpF), found in Mesomycoplasma hyorhinis (Mycoplasma hyorhinis).